Consider the following 388-residue polypeptide: Alanine racemase (388 aa).

The Proton acceptor; specific for D-alanine role is filled by K44. The residue at position 44 (K44) is an N6-(pyridoxal phosphate)lysine. R142 is a binding site for substrate. Residue Y273 is the Proton acceptor; specific for L-alanine of the active site. Residue M321 coordinates substrate.

This sequence belongs to the alanine racemase family. It depends on pyridoxal 5'-phosphate as a cofactor.

It catalyses the reaction L-alanine = D-alanine. It participates in amino-acid biosynthesis; D-alanine biosynthesis; D-alanine from L-alanine: step 1/1. Catalyzes the interconversion of L-alanine and D-alanine. May also act on other amino acids. The chain is Alanine racemase (alr) from Mycobacterium leprae (strain TN).